The sequence spans 602 residues: Elongation factor 4 (602 aa).

Residues 7–188 (ENIRNFSIIA…SIIRLVPPPK (182 aa)) form the tr-type G domain. GTP-binding positions include 19–24 (DHGKST) and 135–138 (NKID).

This sequence belongs to the TRAFAC class translation factor GTPase superfamily. Classic translation factor GTPase family. LepA subfamily.

The protein resides in the cell inner membrane. The enzyme catalyses GTP + H2O = GDP + phosphate + H(+). In terms of biological role, required for accurate and efficient protein synthesis under certain stress conditions. May act as a fidelity factor of the translation reaction, by catalyzing a one-codon backward translocation of tRNAs on improperly translocated ribosomes. Back-translocation proceeds from a post-translocation (POST) complex to a pre-translocation (PRE) complex, thus giving elongation factor G a second chance to translocate the tRNAs correctly. Binds to ribosomes in a GTP-dependent manner. This Chlamydia trachomatis serovar A (strain ATCC VR-571B / DSM 19440 / HAR-13) protein is Elongation factor 4.